The following is a 103-amino-acid chain: uncharacterized protein (103 aa).

The helical transmembrane segment at phenylalanine 37–isoleucine 57 threads the bilayer.

It is found in the membrane. This is an uncharacterized protein from Saccharomyces cerevisiae (strain ATCC 204508 / S288c) (Baker's yeast).